Here is a 265-residue protein sequence, read N- to C-terminus: tRNA pseudouridine synthase A (265 aa).

Asp55 acts as the Nucleophile in catalysis. Residue Tyr113 participates in substrate binding.

It belongs to the tRNA pseudouridine synthase TruA family. As to quaternary structure, homodimer.

The catalysed reaction is uridine(38/39/40) in tRNA = pseudouridine(38/39/40) in tRNA. Formation of pseudouridine at positions 38, 39 and 40 in the anticodon stem and loop of transfer RNAs. The polypeptide is tRNA pseudouridine synthase A (Levilactobacillus brevis (strain ATCC 367 / BCRC 12310 / CIP 105137 / JCM 1170 / LMG 11437 / NCIMB 947 / NCTC 947) (Lactobacillus brevis)).